Here is a 1321-residue protein sequence, read N- to C-terminus: Bile salt export pump (1321 aa).

Residues 1 to 62 (MSDSVILRSV…FSSSKDIWLM (62 aa)) lie on the Cytoplasmic side of the membrane. An ABC transmembrane type-1 1 domain is found at 62-385 (MLMGGVCALL…ASSCLEIFST (324 aa)). A helical membrane pass occupies residues 63 to 83 (LMGGVCALLHGMAQPGILIIF). Topologically, residues 84–147 (GIMTDIFIKY…MIKFSGIYAG (64 aa)) are extracellular. Asn109, Asn116, Asn122, and Asn125 each carry an N-linked (GlcNAc...) asparagine glycan. Residues 148-168 (VGMTVLILGYFQIRLWVITGA) form a helical membrane-spanning segment. The Cytoplasmic portion of the chain corresponds to 169–215 (RQIRRMRKIYFRRIMRMEIGWFDCTSVGELNSRFADDIEKINDAIAD). Residues 216 to 236 (QLAHFLQRMSTAMCGLLLGFY) traverse the membrane as a helical segment. The Extracellular segment spans residues 237–240 (RGWK). Residues 241–261 (LTLVILAVSPLIGIGAAVIGL) traverse the membrane as a helical segment. Residues 262-319 (SIAKFTELELKAYAKAGSIADEVLSSIRTVAAFGGENKEVERYEKNLVFAQRWGIWKG) lie on the Cytoplasmic side of the membrane. Residues 320–340 (MVMGFFTGYMWCLIFFCYALA) form a helical membrane-spanning segment. Residues 341 to 353 (FWYGSTLVLDEEE) are Extracellular-facing. Residues 354-374 (YTPGTLVQIFLCVILAAMNIG) form a helical membrane-spanning segment. Over 375–755 (HASSCLEIFS…KYNIPEWHYI (381 aa)) the chain is Cytoplasmic. Positions 420–656 (IEFHNVTFHY…KGVYFMLVTL (237 aa)) constitute an ABC transporter 1 domain. 455 to 462 (GSSGAGKS) lines the ATP pocket. A Phosphothreonine modification is found at Thr586. Position 587 is a phosphoserine (Ser587). Positions 651 to 674 (FMLVTLQSQGDNAHKETSIMGKDA) are interaction with HAX1. A phosphoserine mark is found at Ser692, Ser703, and Ser706. Positions 755–1043 (ILVGSLSAAI…TFSYTPSYAK (289 aa)) constitute an ABC transmembrane type-1 2 domain. Residues 756–776 (LVGSLSAAINGAVTPIYSLLF) form a helical membrane-spanning segment. Residues 777–794 (SQLLGTFSLLDKEQQRSE) are Extracellular-facing. Residues 795–815 (IHSMCLFFVILGCVSIFTQFL) form a helical membrane-spanning segment. The Cytoplasmic segment spans residues 816–869 (QGYTFAKSGELLTKRLRKFGFKAMLGQDIGWFDDLRNNPGVLTTRLATDASQVQ). The next 2 membrane-spanning stretches (helical) occupy residues 870–890 (GATGSQVGMMVNSFTNIIAAL) and 891–911 (LIAFFFSWKLSLIITIFFPFL). The Cytoplasmic segment spans residues 912 to 979 (ALSGAVQTKM…SYKTAVRKAN (68 aa)). A helical membrane pass occupies residues 980–1000 (IYGLCFAFSQGIAFLANSAAY). The Extracellular segment spans residues 1001–1011 (RYGGYLIAYEG). The chain crosses the membrane as a helical span at residues 1012-1032 (LGFSHVFRVVSSVALSATAVG). The Cytoplasmic segment spans residues 1033–1321 (RTFSYTPSYA…KLVITGAPIS (289 aa)). In terms of domain architecture, ABC transporter 2 spans 1078 to 1316 (IDFIDCKFTY…KGAYYKLVIT (239 aa)). 1113–1120 (GSSGCGKS) lines the ATP pocket. Ser1321 bears the Phosphoserine mark.

It belongs to the ABC transporter superfamily. ABCB family. Multidrug resistance exporter (TC 3.A.1.201) subfamily. In terms of assembly, interacts with HAX1. Interacts with the adapter protein complex 2 (AP-2) throught AP2A2 or AP2A1; this interaction regulates cell membrane expression of ABCB11 through its internalization in a clathrin-dependent manner and its subsequent degradation. Ubiquitinated; short-chain ubiquitination regulates cell-Surface expression of ABCB11. In terms of processing, N-glycosylated. Expressed predominantly, if not exclusively in the liver, where it was further localized to the canalicular microvilli and to subcanalicular vesicles of the hepatocytes by in situ.

Its subcellular location is the apical cell membrane. The protein resides in the recycling endosome membrane. It is found in the endosome. The protein localises to the cell membrane. It catalyses the reaction cholate(in) + ATP + H2O = cholate(out) + ADP + phosphate + H(+). It carries out the reaction taurocholate(in) + ATP + H2O = taurocholate(out) + ADP + phosphate + H(+). The catalysed reaction is glycocholate(in) + ATP + H2O = glycocholate(out) + ADP + phosphate + H(+). The enzyme catalyses glycochenodeoxycholate(in) + ATP + H2O = glycochenodeoxycholate(out) + ADP + phosphate + H(+). It catalyses the reaction taurochenodeoxycholate(in) + ATP + H2O = taurochenodeoxycholate(out) + ADP + phosphate + H(+). It carries out the reaction glycoursodeoxycholate(in) + ATP + H2O = glycoursodeoxycholate(out) + ADP + phosphate + H(+). The catalysed reaction is tauroursodeoxycholate(in) + ATP + H2O = tauroursodeoxycholate(out) + ADP + phosphate + H(+). The enzyme catalyses taurodeoxycholate(in) + ATP + H2O = taurodeoxycholate(out) + ADP + phosphate + H(+). It catalyses the reaction pravastatin(in) + ATP + H2O = pravastatin(out) + ADP + phosphate + H(+). Its activity is regulated as follows. The uptake of taurocholate is inhibited by taurolithocholate sulfate with an IC(50) of 52.9 uM. Pravastatin competitively inhibits the transport of taurocholic acid. Cyclosporin A, glibenclamide, rifampicin and troglitazonestrongly competitively inhibit the transport activity of taurocholate. The canalicular transport activity of taurocholate is strongly dependent on canalicular membrane cholesterol content. The uptake of taurocholate is increased by short- and medium-chain fatty acids. Cholesterol increases transport capacity of taurocholate without affecting the affinity for the substrate. Functionally, catalyzes the transport of the major hydrophobic bile salts, such as taurine and glycine-conjugated cholic acid across the canalicular membrane of hepatocytes in an ATP-dependent manner, therefore participates in hepatic bile acid homeostasis and consequently to lipid homeostasis through regulation of biliary lipid secretion in a bile salts dependent manner. Transports taurine-conjugated bile salts more rapidly than glycine-conjugated bile salts. Also transports non-bile acid compounds, such as pravastatin and fexofenadine in an ATP-dependent manner and may be involved in their biliary excretion. This chain is Bile salt export pump, found in Rattus norvegicus (Rat).